The chain runs to 335 residues: Probable geranylgeranyl transferase type-2 subunit beta (335 aa).

PFTB repeat units follow at residues 74–115 (TEEI…IIFN), 122–163 (ADTI…HLLG), 170–211 (IDSA…AIAG), 218–259 (RDRT…AILG), and 266–312 (SDAM…DDTL). Geranylgeranyl diphosphate contacts are provided by residues 196–198 (HSG) and 238–250 (RPEK…YSWW). Zn(2+)-binding residues include Asp244, Cys246, and His296.

The protein belongs to the protein prenyltransferase subunit beta family. As to quaternary structure, heterodimer of an alpha and a beta subunit. It depends on Zn(2+) as a cofactor.

The enzyme catalyses geranylgeranyl diphosphate + L-cysteinyl-[protein] = S-geranylgeranyl-L-cysteinyl-[protein] + diphosphate. Catalyzes the transfer of a geranyl-geranyl moiety from geranyl-geranyl pyrophosphate to both cysteines in Rab proteins with an -XXCC, -XCXC and -CCXX C-terminal. This chain is Probable geranylgeranyl transferase type-2 subunit beta (ggtb-1), found in Caenorhabditis elegans.